Consider the following 336-residue polypeptide: Cytoskeleton protein RodZ (336 aa).

Residues Met-1–Gly-111 lie on the Cytoplasmic side of the membrane. The 53-residue stretch at Leu-19–Leu-71 folds into the HTH cro/C1-type domain. Residues Gln-30 to Glu-49 constitute a DNA-binding region (H-T-H motif). A helical; Signal-anchor for type II membrane protein transmembrane segment spans residues Trp-112–Trp-132. At Trp-133–Gln-336 the chain is on the periplasmic side. Residues Asn-155 to Gly-243 form a disordered region. Residues Gly-161–Asp-175 are compositionally biased toward polar residues. Composition is skewed to low complexity over residues Thr-176–Pro-214 and Thr-221–Gly-243.

Belongs to the RodZ family.

Its subcellular location is the cell inner membrane. Cytoskeletal protein that is involved in cell-shape control through regulation of the length of the long axis. The protein is Cytoskeleton protein RodZ of Salmonella newport (strain SL254).